The following is a 311-amino-acid chain: Porphobilinogen deaminase (311 aa).

At cysteine 242 the chain carries S-(dipyrrolylmethanemethyl)cysteine.

Belongs to the HMBS family. Monomer. The cofactor is dipyrromethane.

The enzyme catalyses 4 porphobilinogen + H2O = hydroxymethylbilane + 4 NH4(+). The protein operates within porphyrin-containing compound metabolism; protoporphyrin-IX biosynthesis; coproporphyrinogen-III from 5-aminolevulinate: step 2/4. Tetrapolymerization of the monopyrrole PBG into the hydroxymethylbilane pre-uroporphyrinogen in several discrete steps. This Neisseria meningitidis serogroup A / serotype 4A (strain DSM 15465 / Z2491) protein is Porphobilinogen deaminase (hemC).